A 236-amino-acid polypeptide reads, in one-letter code: Phosphoribosylaminoimidazole-succinocarboxamide synthase (236 aa).

The protein belongs to the SAICAR synthetase family.

It carries out the reaction 5-amino-1-(5-phospho-D-ribosyl)imidazole-4-carboxylate + L-aspartate + ATP = (2S)-2-[5-amino-1-(5-phospho-beta-D-ribosyl)imidazole-4-carboxamido]succinate + ADP + phosphate + 2 H(+). Its pathway is purine metabolism; IMP biosynthesis via de novo pathway; 5-amino-1-(5-phospho-D-ribosyl)imidazole-4-carboxamide from 5-amino-1-(5-phospho-D-ribosyl)imidazole-4-carboxylate: step 1/2. This chain is Phosphoribosylaminoimidazole-succinocarboxamide synthase, found in Pseudomonas putida (strain W619).